A 252-amino-acid polypeptide reads, in one-letter code: Vacuolar-sorting protein dot2 (252 aa).

Belongs to the SNF8 family. In terms of assembly, component of the endosomal sorting complex required for transport II (ESCRT-II).

Its subcellular location is the cytoplasm. It localises to the nucleus. The protein localises to the endosome membrane. In terms of biological role, component of the endosomal sorting complex required for transport II (ESCRT-II), which is required for multivesicular body (MVB) formation and sorting of endosomal cargo proteins into MVBs. The MVB pathway mediates delivery of transmembrane proteins into the lumen of the lysosome for degradation. The ESCRT-II complex is probably involved in the recruitment of the ESCRT-III complex. Negatively regulates meiotic spindle pole body maturation via indirect regulation of the pcp1 gene. Required for efficient entry into pre-meiotic S phase. This chain is Vacuolar-sorting protein dot2 (dot2), found in Schizosaccharomyces pombe (strain 972 / ATCC 24843) (Fission yeast).